Reading from the N-terminus, the 239-residue chain is Small ribosomal subunit protein uS3 (239 aa).

A KH type-2 domain is found at 40–108 (RGLLEKELYS…VALNVQEVQN (69 aa)). The tract at residues 212–239 (KPKARPELPKAEERPRRRRPAVRVKKEE) is disordered. Positions 215-226 (ARPELPKAEERP) are enriched in basic and acidic residues. Residues 227 to 239 (RRRRPAVRVKKEE) are compositionally biased toward basic residues.

It belongs to the universal ribosomal protein uS3 family. As to quaternary structure, part of the 30S ribosomal subunit. Forms a tight complex with proteins S10 and S14.

Binds the lower part of the 30S subunit head. Binds mRNA in the 70S ribosome, positioning it for translation. The chain is Small ribosomal subunit protein uS3 (rpsC) from Thermus thermophilus (strain ATCC BAA-163 / DSM 7039 / HB27).